The chain runs to 72 residues: Disintegrin sasaimin (72 aa).

Positions 1 to 72 (EAGEECDCGA…SAGCPRNPFH (72 aa)) constitute a Disintegrin domain. Disulfide bonds link Cys6–Cys21, Cys8–Cys16, Cys15–Cys38, Cys29–Cys35, Cys34–Cys59, and Cys47–Cys66. Residues 51–53 (RGD) carry the Cell attachment site motif.

It belongs to the venom metalloproteinase (M12B) family. P-II subfamily. P-IIa sub-subfamily. Monomer. In terms of tissue distribution, expressed by the venom gland.

It is found in the secreted. Its function is as follows. Inhibits ADP- (IC(50)=66 nM) and collagen-induced (IC(50)=100 nM) aggregation of human platelets. In vitro, inhibits adhesion of endothelial cells to vitronectin, type-I collagen and, to a lower degree, fibronectin and laminin. The polypeptide is Disintegrin sasaimin (Cerrophidion sasai (Costa Rica montane pitviper)).